The following is a 264-amino-acid chain: MHQYLDLLRRIQAEGVTKTDRTGTGTTSVFGHQMRFDLSRGFPLVTTKKLHTRSIFVELLWFLRGDTNIGWLKDNKVSIWDEWADANGDLGPVYGKQWRSWACPDGSTVDQITQVVEMIRKSPDSRRLIVSAWNPADIESMALPPCHCLFQFYVADGKLSCQLYQRSADVFLGVPFNIASYALLTHMVAQVTGLEVGAFVHTFGDAHLYSNHMEQAALQLSRAPLPLPRLELNPEVKDLFAFTMDDIKVVDYQCHAHIAAPVAV.

Position 21 (R21) interacts with dUMP. H51 lines the (6R)-5,10-methylene-5,6,7,8-tetrahydrofolate pocket. 126–127 (RR) is a dUMP binding site. The active-site Nucleophile is C146. DUMP is bound by residues 166–169 (RSAD), N177, and 207–209 (HLY). D169 contributes to the (6R)-5,10-methylene-5,6,7,8-tetrahydrofolate binding site. A (6R)-5,10-methylene-5,6,7,8-tetrahydrofolate-binding site is contributed by A263.

The protein belongs to the thymidylate synthase family. Bacterial-type ThyA subfamily. Homodimer.

The protein localises to the cytoplasm. The enzyme catalyses dUMP + (6R)-5,10-methylene-5,6,7,8-tetrahydrofolate = 7,8-dihydrofolate + dTMP. Its pathway is pyrimidine metabolism; dTTP biosynthesis. Its function is as follows. Catalyzes the reductive methylation of 2'-deoxyuridine-5'-monophosphate (dUMP) to 2'-deoxythymidine-5'-monophosphate (dTMP) while utilizing 5,10-methylenetetrahydrofolate (mTHF) as the methyl donor and reductant in the reaction, yielding dihydrofolate (DHF) as a by-product. This enzymatic reaction provides an intracellular de novo source of dTMP, an essential precursor for DNA biosynthesis. In Paramagnetospirillum magneticum (strain ATCC 700264 / AMB-1) (Magnetospirillum magneticum), this protein is Thymidylate synthase.